Consider the following 166-residue polypeptide: MAKGGAKKAAAAAARAAANRMLADNRQARHQYEILETLETGIELVGTEVKSIRNGKANLRDGFCLIRNGELQLHNVHISPHSHAGAYFNHDPLRTRKLLAHRREIDKLRGQLDQKGLALIPLNIHLKGSWIKLTIGLGKGRKLHDKRAAEKEKQSKKEVKAAIARF.

This sequence belongs to the SmpB family.

The protein resides in the cytoplasm. Functionally, required for rescue of stalled ribosomes mediated by trans-translation. Binds to transfer-messenger RNA (tmRNA), required for stable association of tmRNA with ribosomes. tmRNA and SmpB together mimic tRNA shape, replacing the anticodon stem-loop with SmpB. tmRNA is encoded by the ssrA gene; the 2 termini fold to resemble tRNA(Ala) and it encodes a 'tag peptide', a short internal open reading frame. During trans-translation Ala-aminoacylated tmRNA acts like a tRNA, entering the A-site of stalled ribosomes, displacing the stalled mRNA. The ribosome then switches to translate the ORF on the tmRNA; the nascent peptide is terminated with the 'tag peptide' encoded by the tmRNA and targeted for degradation. The ribosome is freed to recommence translation, which seems to be the essential function of trans-translation. This chain is SsrA-binding protein, found in Parasynechococcus marenigrum (strain WH8102).